We begin with the raw amino-acid sequence, 97 residues long: Large ribosomal subunit protein bL21 (97 aa).

This sequence belongs to the bacterial ribosomal protein bL21 family. In terms of assembly, part of the 50S ribosomal subunit. Contacts protein L20.

In terms of biological role, this protein binds to 23S rRNA in the presence of protein L20. This Persephonella marina (strain DSM 14350 / EX-H1) protein is Large ribosomal subunit protein bL21.